Here is a 311-residue protein sequence, read N- to C-terminus: Phospho-N-acetylmuramoyl-pentapeptide-transferase (311 aa).

The next 10 helical transmembrane spans lie at E2–F22, G48–F68, S74–M94, I104–I124, L144–N164, G168–G188, V192–A212, I214–L234, L237–I257, and K288–W308.

Belongs to the glycosyltransferase 4 family. MraY subfamily. Requires Mg(2+) as cofactor.

The protein localises to the cell inner membrane. It carries out the reaction UDP-N-acetyl-alpha-D-muramoyl-L-alanyl-gamma-D-glutamyl-meso-2,6-diaminopimeloyl-D-alanyl-D-alanine + di-trans,octa-cis-undecaprenyl phosphate = di-trans,octa-cis-undecaprenyl diphospho-N-acetyl-alpha-D-muramoyl-L-alanyl-D-glutamyl-meso-2,6-diaminopimeloyl-D-alanyl-D-alanine + UMP. It functions in the pathway cell wall biogenesis; peptidoglycan biosynthesis. Catalyzes the initial step of the lipid cycle reactions in the biosynthesis of the cell wall peptidoglycan: transfers peptidoglycan precursor phospho-MurNAc-pentapeptide from UDP-MurNAc-pentapeptide onto the lipid carrier undecaprenyl phosphate, yielding undecaprenyl-pyrophosphoryl-MurNAc-pentapeptide, known as lipid I. This Kosmotoga olearia (strain ATCC BAA-1733 / DSM 21960 / TBF 19.5.1) protein is Phospho-N-acetylmuramoyl-pentapeptide-transferase.